The primary structure comprises 256 residues: uncharacterized protein (256 aa).

6 helical membrane passes run 6-26, 29-49, 61-81, 145-165, 175-195, and 218-238; these read TSFITQSLVYSLLVVGIVSFL, LALVGLLLPGIILMTTLGTFI, ISGTTGCLLGDWISYYIGLYF, IIGCILWPPVYFFPGIVTGIA, YYFKWLLLLISILIWLGIWLI, and IGWLAILTMSSGILSLIAIQF.

Belongs to the DedA family.

Its subcellular location is the cell membrane. This is an uncharacterized protein from Buchnera aphidicola subsp. Acyrthosiphon pisum (strain APS) (Acyrthosiphon pisum symbiotic bacterium).